Here is a 90-residue protein sequence, read N- to C-terminus: UPF0367 protein SYNPCC7002_A0153 (90 aa).

The protein belongs to the UPF0367 family.

This is UPF0367 protein SYNPCC7002_A0153 from Picosynechococcus sp. (strain ATCC 27264 / PCC 7002 / PR-6) (Agmenellum quadruplicatum).